The sequence spans 272 residues: MSSATVLDSIIEGVRADVAAREAVISLDEIKERAKAAPPPLNVMAALREPGIGVIAEVKRASPSRGALASIGDPAELAQAYQDGGARVISVLTEQRRFNGSLDDLDAVRAAVSIPVLRKDFIVRPYQIHEARAHGADMLLLIVAALDQPVLESLLERTESLGMTALVEVHTEEEADRALKAGASVIGVNARDLKTLEVDRTVFSRIAPGLPSNVIRVAESGVRGTADLLAYAGAGADAVLVGEGLVTSGDPRSAVADLVTAGTHPSCPKPAR.

It belongs to the TrpC family.

The catalysed reaction is 1-(2-carboxyphenylamino)-1-deoxy-D-ribulose 5-phosphate + H(+) = (1S,2R)-1-C-(indol-3-yl)glycerol 3-phosphate + CO2 + H2O. It participates in amino-acid biosynthesis; L-tryptophan biosynthesis; L-tryptophan from chorismate: step 4/5. This chain is Indole-3-glycerol phosphate synthase, found in Mycolicibacterium smegmatis (strain ATCC 700084 / mc(2)155) (Mycobacterium smegmatis).